Reading from the N-terminus, the 270-residue chain is Fibroblast growth factor 5 (270 aa).

Residues Met-1 to Ala-20 form the signal peptide. The disordered stretch occupies residues Leu-26 to Ser-84. The span at Asn-40–Thr-49 shows a compositional bias: gly residues. Residues Ser-50–Gly-70 are compositionally biased toward low complexity. Polar residues predominate over residues Gly-75–Ser-84. Asn-112 carries N-linked (GlcNAc...) asparagine glycosylation. The interval Glu-237–Ser-257 is disordered.

This sequence belongs to the heparin-binding growth factors family. As to quaternary structure, interacts with FGFR1 and FGFR2. Affinity between fibroblast growth factors (FGFs) and their receptors is increased by heparan sulfate glycosaminoglycans that function as coreceptors.

The protein localises to the secreted. Functionally, plays an important role in the regulation of cell proliferation and cell differentiation. Required for normal regulation of the hair growth cycle. Functions as an inhibitor of hair elongation by promoting progression from anagen, the growth phase of the hair follicle, into catagen the apoptosis-induced regression phase. In Canis lupus familiaris (Dog), this protein is Fibroblast growth factor 5 (FGF5).